A 282-amino-acid chain; its full sequence is uncharacterized protein (282 aa).

Residues 205 to 277 (LAQQRRVYAQ…DELQNKARDA (73 aa)) adopt a coiled-coil conformation.

This is an uncharacterized protein from Treponema pallidum (strain Nichols).